The following is a 153-amino-acid chain: Lipoprotein signal peptidase (153 aa).

Transmembrane regions (helical) follow at residues 7–27 (LIII…LNNY), 59–79 (NLIR…IFYM), and 93–113 (SIII…GSVI). Residues D114 and D132 contribute to the active site. Residues 123–143 (WHFPVFNFADISIFIGFLILI) traverse the membrane as a helical segment.

This sequence belongs to the peptidase A8 family.

Its subcellular location is the cell membrane. The catalysed reaction is Release of signal peptides from bacterial membrane prolipoproteins. Hydrolyzes -Xaa-Yaa-Zaa-|-(S,diacylglyceryl)Cys-, in which Xaa is hydrophobic (preferably Leu), and Yaa (Ala or Ser) and Zaa (Gly or Ala) have small, neutral side chains.. The protein operates within protein modification; lipoprotein biosynthesis (signal peptide cleavage). Functionally, this protein specifically catalyzes the removal of signal peptides from prolipoproteins. The polypeptide is Lipoprotein signal peptidase (Wigglesworthia glossinidia brevipalpis).